The sequence spans 219 residues: Nodulation protein NolA (219 aa).

The HTH merR-type domain maps to 10-79 (RWRIGELAEA…LHEIRKAMEG (70 aa)). Residues 13–32 (IGELAEATGVTVRTLHHYEH) constitute a DNA-binding region (H-T-H motif).

Its function is as follows. Involved in genotype-specific nodulation of soybeans. This Bradyrhizobium elkanii protein is Nodulation protein NolA (nolA).